Here is a 372-residue protein sequence, read N- to C-terminus: Aryl-hydrocarbon-interacting protein-like 1 (372 aa).

The PPIase FKBP-type domain occupies 53–145; that stretch reads REVGQPMHII…DLDELQKEPQ (93 aa). 3 TPR repeats span residues 178 to 211, 230 to 263, and 264 to 297; these read VPVL…LRNL, NTLI…HPGI, and VKAY…EPSM. The disordered stretch occupies residues 325–372; sequence NMLSQGATWSPAEPPAEPPAESSTEPPAEPPAEPPAELTLTPGHPLQH.

As to quaternary structure, interacts with NUB1.

The protein localises to the cytoplasm. Its subcellular location is the nucleus. Its function is as follows. May be important in protein trafficking and/or protein folding and stabilization. The polypeptide is Aryl-hydrocarbon-interacting protein-like 1 (AIPL1) (Saimiri boliviensis boliviensis (Bolivian squirrel monkey)).